We begin with the raw amino-acid sequence, 139 residues long: Metallothiol transferase FosB (139 aa).

In terms of domain architecture, VOC spans 4 to 119 (GINHITYSVS…DGHKLELHTG (116 aa)). 3 residues coordinate Mg(2+): histidine 7, histidine 66, and glutamate 115. Glutamate 115 serves as the catalytic Proton donor/acceptor.

The protein belongs to the fosfomycin resistance protein family. FosB subfamily. As to quaternary structure, homodimer. Mg(2+) is required as a cofactor.

Its subcellular location is the cytoplasm. Functionally, metallothiol transferase which confers resistance to fosfomycin by catalyzing the addition of a thiol cofactor to fosfomycin. L-cysteine is probably the physiological thiol donor. This is Metallothiol transferase FosB from Staphylococcus epidermidis.